Here is a 429-residue protein sequence, read N- to C-terminus: Gamma-glutamyl phosphate reductase (429 aa).

The protein belongs to the gamma-glutamyl phosphate reductase family.

Its subcellular location is the cytoplasm. It carries out the reaction L-glutamate 5-semialdehyde + phosphate + NADP(+) = L-glutamyl 5-phosphate + NADPH + H(+). The protein operates within amino-acid biosynthesis; L-proline biosynthesis; L-glutamate 5-semialdehyde from L-glutamate: step 2/2. Catalyzes the NADPH-dependent reduction of L-glutamate 5-phosphate into L-glutamate 5-semialdehyde and phosphate. The product spontaneously undergoes cyclization to form 1-pyrroline-5-carboxylate. The sequence is that of Gamma-glutamyl phosphate reductase from Methylibium petroleiphilum (strain ATCC BAA-1232 / LMG 22953 / PM1).